The primary structure comprises 313 residues: Olfactory receptor 4M2 (313 aa).

Topologically, residues 1–25 are cytoplasmic; the sequence is METANYTKVTEFVLTGLSQTPEVQL. A helical membrane pass occupies residues 26–46; the sequence is VLFVIFLSFYLFILPGNILII. Residues 47–57 lie on the Extracellular side of the membrane; that stretch reads CTISLDPHLTS. A helical membrane pass occupies residues 58-78; it reads PMYFLLANLAFLDIWYSSITA. Over 79 to 97 the chain is Cytoplasmic; sequence PEMLIDFFVERKIISFDEC. A disulfide bridge connects residues C97 and C179. The helical transmembrane segment at 98 to 118 threads the bilayer; it reads IAQLFFLHFAGASEMFLLTVM. The Extracellular portion of the chain corresponds to 119–142; it reads AFDLYTAICRPLHYATIMNQRLCC. Residues 143 to 163 traverse the membrane as a helical segment; the sequence is ILVALSWRGGFIHSIIQVALI. The Cytoplasmic portion of the chain corresponds to 164-204; sequence VRLPFCGPNELDSYFCDITQVVRIACANTFPEELVMICSSG. Residues 205–225 form a helical membrane-spanning segment; that stretch reads LISVVCLIALLMSYAFLLALL. Residues 226–238 are Extracellular-facing; sequence KKLSGSGENTNRA. The chain crosses the membrane as a helical span at residues 239–259; that stretch reads VSTCYSHITIVVLMFGPSIYI. Residues 260 to 270 are Cytoplasmic-facing; that stretch reads YARPFDSFSLD. Residues 271 to 291 form a helical membrane-spanning segment; that stretch reads KVVSVFNTLIFPLHNPIIYTL. Over 292–313 the chain is Extracellular; the sequence is RNKEVKAAMRKLVTKYILCKEK.

The protein belongs to the G-protein coupled receptor 1 family.

The protein resides in the membrane. In terms of biological role, odorant receptor. The chain is Olfactory receptor 4M2 from Homo sapiens (Human).